An 80-amino-acid polypeptide reads, in one-letter code: Exodeoxyribonuclease 7 small subunit (80 aa).

It belongs to the XseB family. Heterooligomer composed of large and small subunits.

The protein resides in the cytoplasm. It catalyses the reaction Exonucleolytic cleavage in either 5'- to 3'- or 3'- to 5'-direction to yield nucleoside 5'-phosphates.. Bidirectionally degrades single-stranded DNA into large acid-insoluble oligonucleotides, which are then degraded further into small acid-soluble oligonucleotides. The chain is Exodeoxyribonuclease 7 small subunit from Klebsiella pneumoniae (strain 342).